The chain runs to 518 residues: Retinal dehydrogenase 2 (518 aa).

NAD(+) is bound by residues 184-186 (IPW), 210-213 (KPAE), and 264-266 (STE). Glutamate 286 (proton acceptor) is an active-site residue. Cysteine 320 (nucleophile) is an active-site residue. Residues 366–370 (KQYNK) and glutamate 417 each bind NAD(+).

Belongs to the aldehyde dehydrogenase family. As to quaternary structure, homotetramer.

The protein resides in the cytoplasm. The catalysed reaction is retinal + NAD(+) + H2O = retinoate + NADH + 2 H(+). It catalyses the reaction all-trans-retinal + NAD(+) + H2O = all-trans-retinoate + NADH + 2 H(+). It carries out the reaction all-trans-13,14-dihydroretinal + NAD(+) + H2O = all-trans-13,14-dihydroretinoate + NADH + 2 H(+). It functions in the pathway cofactor metabolism; retinol metabolism. Catalyzes the NAD-dependent oxidation of aldehyde substrates, such as all-trans-retinal and all-trans-13,14-dihydroretinal, to their corresponding carboxylic acids, all-trans-retinoate and all-trans-13,14-dihydroretinoate, respectively. Retinoate signaling is critical for the transcriptional control of many genes, for instance it is crucial for initiation of meiosis in both male and female. Recognizes retinal as substrate, both in its free form and when bound to cellular retinol-binding protein. Lacks activity with benzaldehyde, acetaldehyde and octanal. Displays complete lack of activity with citral. The sequence is that of Retinal dehydrogenase 2 (ALDH1A2) from Gallus gallus (Chicken).